Consider the following 1404-residue polypeptide: G8 domain-containing protein DDB_G0286897 (1404 aa).

The signal sequence occupies residues 1–20 (MNYFKYFIFVVFLFFTIVKC). Helical transmembrane passes span 97-117 (LVGF…GLFA) and 128-148 (IIIL…IQSI). N-linked (GlcNAc...) asparagine glycosylation is found at N352, N365, N413, N481, N639, N838, N979, N1003, N1017, N1253, and N1334. In terms of domain architecture, G8 spans 553–679 (STWASGFVPL…YHNTWTKLST (127 aa)).

It belongs to the comF family.

The protein resides in the membrane. The chain is G8 domain-containing protein DDB_G0286897 from Dictyostelium discoideum (Social amoeba).